The following is a 127-amino-acid chain: Protein ApaG (127 aa).

The ApaG domain occupies glutamate 3 to histidine 127.

In Thiobacillus denitrificans (strain ATCC 25259 / T1), this protein is Protein ApaG.